The primary structure comprises 1405 residues: DNA-directed RNA polymerase subunit beta' (1405 aa).

Positions 70, 72, 85, and 88 each coordinate Zn(2+). Residues D460, D462, and D464 each coordinate Mg(2+). C814, C888, C895, and C898 together coordinate Zn(2+).

Belongs to the RNA polymerase beta' chain family. The RNAP catalytic core consists of 2 alpha, 1 beta, 1 beta' and 1 omega subunit. When a sigma factor is associated with the core the holoenzyme is formed, which can initiate transcription. Mg(2+) is required as a cofactor. It depends on Zn(2+) as a cofactor.

It carries out the reaction RNA(n) + a ribonucleoside 5'-triphosphate = RNA(n+1) + diphosphate. In terms of biological role, DNA-dependent RNA polymerase catalyzes the transcription of DNA into RNA using the four ribonucleoside triphosphates as substrates. The protein is DNA-directed RNA polymerase subunit beta' of Shewanella sediminis (strain HAW-EB3).